We begin with the raw amino-acid sequence, 447 residues long: UDP-N-acetylmuramoylalanine--D-glutamate ligase (447 aa).

Residue 112–118 (GTNGKST) participates in ATP binding.

This sequence belongs to the MurCDEF family.

The protein localises to the cytoplasm. It catalyses the reaction UDP-N-acetyl-alpha-D-muramoyl-L-alanine + D-glutamate + ATP = UDP-N-acetyl-alpha-D-muramoyl-L-alanyl-D-glutamate + ADP + phosphate + H(+). Its pathway is cell wall biogenesis; peptidoglycan biosynthesis. Functionally, cell wall formation. Catalyzes the addition of glutamate to the nucleotide precursor UDP-N-acetylmuramoyl-L-alanine (UMA). This Legionella pneumophila (strain Lens) protein is UDP-N-acetylmuramoylalanine--D-glutamate ligase.